Reading from the N-terminus, the 428-residue chain is Tyrosine--tRNA ligase (428 aa).

An L-tyrosine-binding site is contributed by Y41. Residues 46–55 (PTADSLHLGH) carry the 'HIGH' region motif. N6-acetyllysine is present on K148. L-tyrosine-binding residues include Y179 and Q183. The short motif at 239–243 (KFGKT) is the 'KMSKS' region element. K242 serves as a coordination point for ATP. Positions 361-418 (ADLMQALVDSELQPSRGQARKTIASNAITINGEKQSDPEYFFKEEDRLFGRFTLLRRG) constitute an S4 RNA-binding domain.

Belongs to the class-I aminoacyl-tRNA synthetase family. TyrS type 1 subfamily. Homodimer.

The protein resides in the cytoplasm. The enzyme catalyses tRNA(Tyr) + L-tyrosine + ATP = L-tyrosyl-tRNA(Tyr) + AMP + diphosphate + H(+). In terms of biological role, catalyzes the attachment of tyrosine to tRNA(Tyr) in a two-step reaction: tyrosine is first activated by ATP to form Tyr-AMP and then transferred to the acceptor end of tRNA(Tyr). This chain is Tyrosine--tRNA ligase, found in Escherichia coli O1:K1 / APEC.